We begin with the raw amino-acid sequence, 358 residues long: MESAAVSAAPDATLDPPLEQLRHLAGELRQLLPGVRVGEAQETTKEFDREAFWRRFNEAAVTVSREATTLTVAFSRLPLPSPQETQRFCEQVHAAIKAIIGVYYLFPKDQGITLRKLVRSATLDIVDDMAQLVEALYINPAQSSPENLISYNSVWDACQHVPQIPKDNKAAALSVLTKSVDLVKDAHEEMEQAVEECDPYCGLLNDIEEDSSDNHVDEDILGCPNNRDSYWSEEDQELIIPCLALARASKACLKKIRLSVAENGKKDQVAQLDDIVDISDEISPSVDDLALSIYPPVCPLTVRINSAKLASVLKKALEITKASHVTPQPEDSWIPLLINAVDHCMNRIKELTQNEVES.

2 interaction with TCF3 regions span residues methionine 1–valine 183 and isoleucine 149–serine 358. 2 interaction with RPLP0 regions span residues methionine 1 to glutamate 189 and leucine 238 to serine 358. A required for interaction with CCND1 region spans residues methionine 1–isoleucine 207.

The protein belongs to the CCNDBP1 family. As to quaternary structure, interacts with CCND1 and GRAP2. May also interact with COPS5, RPLP0, SIRT6, SYF2 and TCF3. In terms of processing, phosphorylated.

It localises to the cytoplasm. It is found in the nucleus. May negatively regulate cell cycle progression. May act at least in part via inhibition of the cyclin-D1/CDK4 complex, thereby preventing phosphorylation of RB1 and blocking E2F-dependent transcription. The polypeptide is Cyclin-D1-binding protein 1 (CCNDBP1) (Bos taurus (Bovine)).